Consider the following 191-residue polypeptide: Dephospho-CoA kinase (191 aa).

The DPCK domain maps to A3–V191. Residue A11 to F16 coordinates ATP.

The protein belongs to the CoaE family.

The protein resides in the cytoplasm. The enzyme catalyses 3'-dephospho-CoA + ATP = ADP + CoA + H(+). It functions in the pathway cofactor biosynthesis; coenzyme A biosynthesis; CoA from (R)-pantothenate: step 5/5. Functionally, catalyzes the phosphorylation of the 3'-hydroxyl group of dephosphocoenzyme A to form coenzyme A. This chain is Dephospho-CoA kinase, found in Rickettsia typhi (strain ATCC VR-144 / Wilmington).